The chain runs to 251 residues: Flagellar brake protein YcgR (251 aa).

One can recognise a PilZ domain in the interval 127-239; the sequence is QRRDGFRVRP…ASRTLQRYID (113 aa).

It belongs to the YcgR family. Monomer. Interacts with the flagellar basal bodies.

It is found in the bacterial flagellum basal body. In terms of biological role, acts as a flagellar brake, regulating swimming and swarming in a bis-(3'-5') cyclic diguanylic acid (c-di-GMP)-dependent manner. Binds 1 c-di-GMP dimer per subunit. Increasing levels of c-di-GMP lead to decreased motility. In Leptothrix cholodnii (strain ATCC 51168 / LMG 8142 / SP-6) (Leptothrix discophora (strain SP-6)), this protein is Flagellar brake protein YcgR.